The primary structure comprises 1746 residues: tRNA (32-2'-O)-methyltransferase regulator THADA (1746 aa).

Residues 1252–1286 (EQALAEIRRIVVELKALQLRLKNTEAANTKLNTNV) adopt a coiled-coil conformation.

The protein belongs to the THADA family. Interacts with SERCA. In terms of tissue distribution, detected in the larval fat body, salivary glands and wing imaginal disks (at protein level).

The protein resides in the endoplasmic reticulum. Functionally, together with methyltransferase Trm7-32, methylates the 2'-O-ribose of nucleotides at position 32 of the anticodon loop of substrate tRNAs. Plays a key role in energy homeostasis by regulating the balance between energy storage and heat production. Functions by negatively regulating Ca(2+) signaling pathways that are involved in heat production and maintaining correct lipid storage in the fat body. Regulates Ca(2+) signaling pathways by reducing the activity of the calcium-transporting ATPase SERCA possibly by promoting uncoupling of SERCA ATP hydrolysis from calcium pumping. May also function in the nervous system to control feeding behavior. The chain is tRNA (32-2'-O)-methyltransferase regulator THADA from Drosophila melanogaster (Fruit fly).